The sequence spans 138 residues: Ig heavy chain V region TEPC 1017 (138 aa).

An N-terminal signal peptide occupies residues 1 to 20; sequence MGWSYIILFLVATATDVHSQ. Residues 21 to 49 form a framework-1 region; sequence VQLQQPGAELVKPGASVQLSCKASGHTFT. Residues C41 and C115 are joined by a disulfide bond. Positions 50–54 are complementarity-determining-1; it reads NYWIH. Residues 55–68 are framework-2; it reads WVKQRPGQGLEWIG. Residues 69-85 form a complementarity-determining-2 region; that stretch reads EINPNDGRSNYNEKFKN. Residues 86–117 form a framework-3 region; sequence KATLTVDKSSSTAYMQLSSLTPEEFAVYYCAR. The complementarity-determining-3 stretch occupies residues 118 to 127; the sequence is SDGYYDWFVY. The tract at residues 128–138 is framework-4; sequence WGQGTLVTFSA.

This chain is Ig heavy chain V region TEPC 1017, found in Mus musculus (Mouse).